The primary structure comprises 178 residues: Oligoribonuclease (178 aa).

The region spanning 7-168 is the Exonuclease domain; sequence LIWIDLEMTG…DDIRESIAEL (162 aa). Tyr-128 is an active-site residue.

The protein belongs to the oligoribonuclease family.

It localises to the cytoplasm. Its function is as follows. 3'-to-5' exoribonuclease specific for small oligoribonucleotides. The chain is Oligoribonuclease from Pseudomonas syringae pv. syringae (strain B728a).